Consider the following 183-residue polypeptide: Inner membrane-spanning protein YciB (183 aa).

The next 5 helical transmembrane spans lie at Val22 to Phe44, Ile53 to Phe73, Trp76 to Phe96, Leu121 to Phe141, and Gly153 to Ile173.

It belongs to the YciB family.

The protein resides in the cell inner membrane. Functionally, plays a role in cell envelope biogenesis, maintenance of cell envelope integrity and membrane homeostasis. The sequence is that of Inner membrane-spanning protein YciB from Haemophilus ducreyi (strain 35000HP / ATCC 700724).